The following is a 637-amino-acid chain: Threonine--tRNA ligase (637 aa).

In terms of domain architecture, TGS spans 1–61; the sequence is MPNVKLPDGN…KEDCSLIIVT (61 aa). The interval 242 to 533 is catalytic; it reads DHRKLGKALD…LIEHYAGKLP (292 aa). 3 residues coordinate Zn(2+): Cys333, His384, and His510.

Belongs to the class-II aminoacyl-tRNA synthetase family. In terms of assembly, homodimer. Requires Zn(2+) as cofactor.

It is found in the cytoplasm. It carries out the reaction tRNA(Thr) + L-threonine + ATP = L-threonyl-tRNA(Thr) + AMP + diphosphate + H(+). In terms of biological role, catalyzes the attachment of threonine to tRNA(Thr) in a two-step reaction: L-threonine is first activated by ATP to form Thr-AMP and then transferred to the acceptor end of tRNA(Thr). Also edits incorrectly charged L-seryl-tRNA(Thr). In Legionella pneumophila (strain Paris), this protein is Threonine--tRNA ligase.